The sequence spans 266 residues: NAD-capped RNA hydrolase NudC (266 aa).

A substrate-binding site is contributed by Arg74. Cys103, Cys106, Cys121, and Cys124 together coordinate Zn(2+). A substrate-binding site is contributed by Tyr129. The Nudix hydrolase domain occupies 130 to 253; the sequence is PRVSPCIIVA…TIARVLIDET (124 aa). A divalent metal cation is bound by residues Ala163, Glu179, and Glu183. A Nudix box motif is present at residues 164–185; the sequence is GFVEAGETLEQCVAREVEEETG. Position 197 to 204 (197 to 204) interacts with substrate; the sequence is QPWAFPSN. Glu224 lines the a divalent metal cation pocket. Residue Ala246 coordinates substrate.

The protein belongs to the Nudix hydrolase family. NudC subfamily. As to quaternary structure, homodimer. Mg(2+) is required as a cofactor. Requires Mn(2+) as cofactor. Zn(2+) serves as cofactor.

The enzyme catalyses a 5'-end NAD(+)-phospho-ribonucleoside in mRNA + H2O = a 5'-end phospho-adenosine-phospho-ribonucleoside in mRNA + beta-nicotinamide D-ribonucleotide + 2 H(+). It catalyses the reaction NAD(+) + H2O = beta-nicotinamide D-ribonucleotide + AMP + 2 H(+). The catalysed reaction is NADH + H2O = reduced beta-nicotinamide D-ribonucleotide + AMP + 2 H(+). In terms of biological role, mRNA decapping enzyme that specifically removes the nicotinamide adenine dinucleotide (NAD) cap from a subset of mRNAs by hydrolyzing the diphosphate linkage to produce nicotinamide mononucleotide (NMN) and 5' monophosphate mRNA. The NAD-cap is present at the 5'-end of some mRNAs and stabilizes RNA against 5'-processing. Has preference for mRNAs with a 5'-end purine. Catalyzes the hydrolysis of a broad range of dinucleotide pyrophosphates. The chain is NAD-capped RNA hydrolase NudC from Photobacterium profundum (strain SS9).